The chain runs to 194 residues: N-acetyltransferase (194 aa).

In terms of domain architecture, N-acetyltransferase spans 9 to 173 (PQVRPGIAED…GRYWDVRWYE (165 aa)).

The protein belongs to the acetyltransferase family. PAT/BAR subfamily.

In Streptomyces griseus, this protein is N-acetyltransferase (nat).